A 513-amino-acid polypeptide reads, in one-letter code: ETS translocation variant 3 (513 aa).

The ETS DNA-binding region spans Ile-35–Asn-116. Positions Gln-138–Trp-202 are disordered. Ser-139, Ser-159, and Ser-315 each carry phosphoserine. Residues Gln-333–Ala-513 form a disordered region. Composition is skewed to basic and acidic residues over residues Glu-357–Val-366, Ile-380–Ser-392, and Gly-399–Lys-419. A Glycyl lysine isopeptide (Lys-Gly) (interchain with G-Cter in SUMO2) cross-link involves residue Lys-381. N6-acetyllysine; alternate is present on Lys-388. Residue Lys-388 forms a Glycyl lysine isopeptide (Lys-Gly) (interchain with G-Cter in SUMO2); alternate linkage. Residues Trp-430–Ser-439 are compositionally biased toward polar residues. Over residues Glu-441 to Glu-450 the composition is skewed to acidic residues. Composition is skewed to basic and acidic residues over residues Asp-451–Ala-466 and Arg-477–Lys-489. The segment covering Ala-504–Ala-513 has biased composition (low complexity).

The protein belongs to the ETS family.

It localises to the nucleus. In terms of biological role, transcriptional repressor that contribute to growth arrest during terminal macrophage differentiation by repressing target genes involved in Ras-dependent proliferation. Represses MMP1 promoter activity. This chain is ETS translocation variant 3 (Etv3), found in Mus musculus (Mouse).